We begin with the raw amino-acid sequence, 349 residues long: Cell adhesion molecule CEACAM8 (349 aa).

An N-terminal signal peptide occupies residues 1 to 34; sequence MGPISAPSCRWRIPWQGLLLTASLFTFWNPPTTA. One can recognise an Ig-like V-type domain in the interval 35-142; the sequence is QLTIEAVPSN…EVTGQFSVHP (108 aa). N-linked (GlcNAc...) asparagine glycosylation is found at N104, N111, N115, N152, N173, N197, N224, N256, N274, N288, and N309. 2 Ig-like C2-type domains span residues 145–232 and 237–319; these read PKPS…VTLN and PDAP…ITVS. A disulfide bond links C167 and C215. Residues C259 and C299 are joined by a disulfide bond. A lipid anchor (GPI-anchor amidated aspartate) is attached at D320. Residues 321–349 constitute a propeptide, removed in mature form; it reads ALVQGSSPGLSARATVSIMIGVLARVALI.

Belongs to the immunoglobulin superfamily. CEA family. Monomer. Heterodimer with CEACAM6; heterodimerizes via its Ig-like V-type domain. Glycosylated. In terms of tissue distribution, expressed in leukocytes of chronic myeloid Leukemia patients and bone marrow.

It localises to the cell membrane. The protein resides in the cell surface. Cell surface glycoprotein that plays a role in cell adhesion in a calcium-independent manner. Mediates heterophilic cell adhesion with other carcinoembryonic antigen-related cell adhesion molecules, such as CEACAM6. Heterophilic interaction with CEACAM8 occurs in activated neutrophils. This is Cell adhesion molecule CEACAM8 from Homo sapiens (Human).